The chain runs to 133 residues: ATP synthase epsilon chain (133 aa).

The protein belongs to the ATPase epsilon chain family. F-type ATPases have 2 components, CF(1) - the catalytic core - and CF(0) - the membrane proton channel. CF(1) has five subunits: alpha(3), beta(3), gamma(1), delta(1), epsilon(1). CF(0) has three main subunits: a, b and c.

The protein localises to the cell membrane. Produces ATP from ADP in the presence of a proton gradient across the membrane. The polypeptide is ATP synthase epsilon chain (Lawsonia intracellularis (strain PHE/MN1-00)).